Consider the following 104-residue polypeptide: Large ribosomal subunit protein uL24 (104 aa).

It belongs to the universal ribosomal protein uL24 family. In terms of assembly, part of the 50S ribosomal subunit.

In terms of biological role, one of two assembly initiator proteins, it binds directly to the 5'-end of the 23S rRNA, where it nucleates assembly of the 50S subunit. One of the proteins that surrounds the polypeptide exit tunnel on the outside of the subunit. In Bartonella bacilliformis (strain ATCC 35685 / KC583 / Herrer 020/F12,63), this protein is Large ribosomal subunit protein uL24.